Reading from the N-terminus, the 381-residue chain is Queuine tRNA-ribosyltransferase (381 aa).

The Proton acceptor role is filled by aspartate 92. Residues 92 to 96, aspartate 146, glutamine 190, and glycine 217 contribute to the substrate site; that span reads DSGGF. The interval 248-254 is RNA binding; it reads GVGRPED. Aspartate 267 functions as the Nucleophile in the catalytic mechanism. Residues 272–276 form an RNA binding; important for wobble base 34 recognition region; it reads TRNAR. Residues cysteine 305, cysteine 307, cysteine 310, and histidine 337 each coordinate Zn(2+).

The protein belongs to the queuine tRNA-ribosyltransferase family. Homodimer. Within each dimer, one monomer is responsible for RNA recognition and catalysis, while the other monomer binds to the replacement base PreQ1. It depends on Zn(2+) as a cofactor.

The enzyme catalyses 7-aminomethyl-7-carbaguanine + guanosine(34) in tRNA = 7-aminomethyl-7-carbaguanosine(34) in tRNA + guanine. Its pathway is tRNA modification; tRNA-queuosine biosynthesis. Its function is as follows. Catalyzes the base-exchange of a guanine (G) residue with the queuine precursor 7-aminomethyl-7-deazaguanine (PreQ1) at position 34 (anticodon wobble position) in tRNAs with GU(N) anticodons (tRNA-Asp, -Asn, -His and -Tyr). Catalysis occurs through a double-displacement mechanism. The nucleophile active site attacks the C1' of nucleotide 34 to detach the guanine base from the RNA, forming a covalent enzyme-RNA intermediate. The proton acceptor active site deprotonates the incoming PreQ1, allowing a nucleophilic attack on the C1' of the ribose to form the product. After dissociation, two additional enzymatic reactions on the tRNA convert PreQ1 to queuine (Q), resulting in the hypermodified nucleoside queuosine (7-(((4,5-cis-dihydroxy-2-cyclopenten-1-yl)amino)methyl)-7-deazaguanosine). In Xanthomonas axonopodis pv. citri (strain 306), this protein is Queuine tRNA-ribosyltransferase.